The chain runs to 201 residues: Small ribosomal subunit protein uS4 (201 aa).

One can recognise an S4 RNA-binding domain in the interval 91 to 157 (CRLDNVVYRA…TPFIIAKETI (67 aa)).

The protein belongs to the universal ribosomal protein uS4 family. In terms of assembly, part of the 30S ribosomal subunit. Contacts protein S5. The interaction surface between S4 and S5 is involved in control of translational fidelity.

One of the primary rRNA binding proteins, it binds directly to 16S rRNA where it nucleates assembly of the body of the 30S subunit. In terms of biological role, with S5 and S12 plays an important role in translational accuracy. In Saccharopolyspora erythraea (strain ATCC 11635 / DSM 40517 / JCM 4748 / NBRC 13426 / NCIMB 8594 / NRRL 2338), this protein is Small ribosomal subunit protein uS4.